The sequence spans 235 residues: Glucosamine-6-phosphate deaminase (235 aa).

D62 (proton acceptor; for enolization step) is an active-site residue. Catalysis depends on N128, which acts as the For ring-opening step. Residue H130 is the Proton acceptor; for ring-opening step of the active site. E135 (for ring-opening step) is an active-site residue.

Belongs to the glucosamine/galactosamine-6-phosphate isomerase family. NagB subfamily.

It carries out the reaction alpha-D-glucosamine 6-phosphate + H2O = beta-D-fructose 6-phosphate + NH4(+). It participates in amino-sugar metabolism; N-acetylneuraminate degradation; D-fructose 6-phosphate from N-acetylneuraminate: step 5/5. In terms of biological role, catalyzes the reversible isomerization-deamination of glucosamine 6-phosphate (GlcN6P) to form fructose 6-phosphate (Fru6P) and ammonium ion. The protein is Glucosamine-6-phosphate deaminase of Streptococcus sanguinis (strain SK36).